Reading from the N-terminus, the 847-residue chain is Vacuolar membrane protease (847 aa).

Topologically, residues 1 to 17 are cytoplasmic; the sequence is MQFGKSLLKHVYTRTFK. Residues 18–38 form a helical membrane-spanning segment; that stretch reads SSLTCSIFAFTLLMIFFVLDW. The Vacuolar segment spans residues 39–348; sequence KRMNVYPRLD…GSYWQINLNL (310 aa). Zn(2+) contacts are provided by H146 and D158. E190 (proton acceptor) is an active-site residue. E191 is a Zn(2+) binding site. Residue N208 is glycosylated (N-linked (GlcNAc...) asparagine). E216 lines the Zn(2+) pocket. N-linked (GlcNAc...) asparagine glycosylation is present at N274. H291 contributes to the Zn(2+) binding site. Residues 349–369 traverse the membrane as a helical segment; it reads HLFLNVVFLIACPAILFMCLF. Topologically, residues 370–381 are cytoplasmic; the sequence is RFPSLYAQLKKP. The chain crosses the membrane as a helical span at residues 382 to 402; that stretch reads CYLICFTLSSLFVLIFDYVVV. The Vacuolar segment spans residues 403–415; it reads QSLTKLNPYVIHS. A helical membrane pass occupies residues 416–436; that stretch reads SPDAVLAFFFLTNLLGLVYSF. Topologically, residues 437–454 are cytoplasmic; that stretch reads RYVATHSRMSNEELSCIE. The helical transmembrane segment at 455 to 475 threads the bilayer; it reads IVLIWYVSMFWYISLLIATLT. Topologically, residues 476–482 are vacuolar; the sequence is SIVRGLG. The chain crosses the membrane as a helical span at residues 483–503; that stretch reads SLYFVNFGFFCSFFCCILTLI. At 504-560 the chain is on the cytoplasmic side; sequence RVRYFVDRMVTINRPANPEQMPLVQSTSGNAYGTSRYPQHRLKAVVSKSASVKLNDN. A helical membrane pass occupies residues 561–581; that stretch reads LWSVLFFSCLVPLPLFTCYNL. Over 582-605 the chain is Vacuolar; that stretch reads LSEVFIPAVHQSLIDGPYSNTCYK. A helical transmembrane segment spans residues 606 to 626; that stretch reads FAVILVFMAIINSSPFVFRAL. Topologically, residues 627–630 are cytoplasmic; sequence SKKS. Residues 631-651 traverse the membrane as a helical segment; the sequence is SAILLMLWVSLLFNILRAEPF. Over 652–847 the chain is Vacuolar; sequence NEKAPIKFRV…LLKMSKTHVM (196 aa). N-linked (GlcNAc...) asparagine glycans are attached at residues N726, N734, N800, and N834.

Belongs to the peptidase M28 family. Zn(2+) is required as a cofactor.

The protein resides in the vacuole membrane. In terms of biological role, may be involved in vacuolar sorting and osmoregulation. The protein is Vacuolar membrane protease of Schizosaccharomyces japonicus (strain yFS275 / FY16936) (Fission yeast).